Here is a 194-residue protein sequence, read N- to C-terminus: Protein GrpE (194 aa).

Polar residues predominate over residues 1–12; the sequence is MSSKEQNTPNEQ. Residues 1–39 are disordered; the sequence is MSSKEQNTPNEQASDEIETEQAKNQGADTAAEAADQRDE.

The protein belongs to the GrpE family. In terms of assembly, homodimer.

The protein resides in the cytoplasm. Functionally, participates actively in the response to hyperosmotic and heat shock by preventing the aggregation of stress-denatured proteins, in association with DnaK and GrpE. It is the nucleotide exchange factor for DnaK and may function as a thermosensor. Unfolded proteins bind initially to DnaJ; upon interaction with the DnaJ-bound protein, DnaK hydrolyzes its bound ATP, resulting in the formation of a stable complex. GrpE releases ADP from DnaK; ATP binding to DnaK triggers the release of the substrate protein, thus completing the reaction cycle. Several rounds of ATP-dependent interactions between DnaJ, DnaK and GrpE are required for fully efficient folding. In Erwinia tasmaniensis (strain DSM 17950 / CFBP 7177 / CIP 109463 / NCPPB 4357 / Et1/99), this protein is Protein GrpE.